The following is a 307-amino-acid chain: Transmembrane and coiled-coil domain-containing protein 5B (307 aa).

Residues 20-212 adopt a coiled-coil conformation; that stretch reads TLEAIKQNLK…SKAQNDSSQV (193 aa). A helical membrane pass occupies residues 246 to 268; that stretch reads YLFFMVMIVIRLLGYVFFHLQYV.

The protein belongs to the TMCO5 family.

The protein localises to the membrane. This chain is Transmembrane and coiled-coil domain-containing protein 5B (Tmco5b), found in Mus musculus (Mouse).